Reading from the N-terminus, the 898-residue chain is MEWSSESAAVRRHRGTAERREGQAAASHPQREASAQEDARGGGRMRGRTESGGESRGAKTALSEARTALALALYLLALRALVQLSLQRLVLSRTSGLQGEFDARQARVYLEHITAIGPRTTGSAENEILTVQYLLEQITLIEEQSNSLHRISVDVQRPTGSFSIDFLGGFTSYYDNITNVVVKLEPQDGAKYAVLANCHFDSVANSPGASDDAVSCAVMLEVLRVMAASPEPLQHAVVFLFNGAEENVLQASHGFITQHPWASLIRAFINLEAAGVGGKELVFQTGPENPWLVQAYVSAAKHPFASVVAQEVFQSGIIPSDTDFRIYRDFGNIPGIDLAFIENGYIYHTKYDTADRILIDSIQRAGDNILAVLKYLATSDMLASSSEYRHGSMVFFDVLGLLVIAYPSRVGSIINYMVVMAVVLYLGRKLLRPNHSNSNYVRDFLCGLGITFISWFTSLVTVLIIAVFVSLIGQSLSWYNYFYIAVCLYGTATVAKIILIHTLAKRFYYVNASDLYLGELFFDTSLFVHCGFLVALTAQGFCSAFMSAVWVAFPLLTKLCVYKDFKKHGAKGRFIALYLLGMFIPYLYGLYLIWAVFEMFTPILGRSGSEIPPDVVLASILAVCVMILSSYFITFIYLVNSTKKTILTLILVCAVTFLLVCSGAFFPYSSNPDSPKPKRVFLQHVSRTFHNLEGSVVKRDSGIWINGFDYTGMSHVTPHIPEINDTIRAHCEENAPLCGFPWYLPVHFLIRKNWYLPAPEISPRNPAHFRLVSKEKMPWDSIKLTFEATGPSHMSFYVRTHKGSTLSQWSLGNGIPVTSRGGDYFVFYSHGLQASAWQFWIEVQVSEEQPEGMVTVAIAAHYLSGENKRSSQLDALKEKFPDWSFPSAWVSTYSLFVF.

M1 bears the N-acetylmethionine mark. Positions 1–59 are disordered; sequence MEWSSESAAVRRHRGTAERREGQAAASHPQREASAQEDARGGGRMRGRTESGGESRGAK. The Cytoplasmic portion of the chain corresponds to 1–66; sequence MEWSSESAAV…GAKTALSEAR (66 aa). A compositionally biased stretch (basic and acidic residues) spans 37 to 57; the sequence is EDARGGGRMRGRTESGGESRG. The helical transmembrane segment at 67 to 87 threads the bilayer; sequence TALALALYLLALRALVQLSLQ. Residues 88–393 lie on the Lumenal side of the membrane; that stretch reads RLVLSRTSGL…SSSEYRHGSM (306 aa). The N-linked (GlcNAc...) asparagine glycan is linked to N176. A disulfide bridge links C198 with C216. Residues H199 and D211 each contribute to the Zn(2+) site. E245 acts as the Proton acceptor in catalysis. Zn(2+) contacts are provided by E246, E272, and H348. A helical membrane pass occupies residues 394–414; that stretch reads VFFDVLGLLVIAYPSRVGSII. Residues 415-451 lie on the Cytoplasmic side of the membrane; the sequence is NYMVVMAVVLYLGRKLLRPNHSNSNYVRDFLCGLGIT. Residues 452–472 traverse the membrane as a helical segment; that stretch reads FISWFTSLVTVLIIAVFVSLI. Residues 473 to 480 lie on the Lumenal side of the membrane; sequence GQSLSWYN. A helical transmembrane segment spans residues 481-501; that stretch reads YFYIAVCLYGTATVAKIILIH. At 502 to 515 the chain is on the cytoplasmic side; that stretch reads TLAKRFYYVNASDL. The helical transmembrane segment at 516 to 538 threads the bilayer; the sequence is YLGELFFDTSLFVHCGFLVALTA. The Lumenal portion of the chain corresponds to 539–542; that stretch reads QGFC. The helical transmembrane segment at 543–562 threads the bilayer; sequence SAFMSAVWVAFPLLTKLCVY. Over 563 to 573 the chain is Cytoplasmic; sequence KDFKKHGAKGR. Residues 574–594 form a helical membrane-spanning segment; it reads FIALYLLGMFIPYLYGLYLIW. At 595 to 615 the chain is on the lumenal side; it reads AVFEMFTPILGRSGSEIPPDV. Residues 616-636 form a helical membrane-spanning segment; sequence VLASILAVCVMILSSYFITFI. Residues 637 to 645 are Cytoplasmic-facing; it reads YLVNSTKKT. The helical transmembrane segment at 646–666 threads the bilayer; the sequence is ILTLILVCAVTFLLVCSGAFF. Residues 667-898 are Lumenal-facing; it reads PYSSNPDSPK…WVSTYSLFVF (232 aa). N724 is a glycosylation site (N-linked (GlcNAc...) asparagine).

This sequence belongs to the peptidase M28 family. Requires Zn(2+) as cofactor. In terms of tissue distribution, widely expressed, with highest levels in ovary, kidney, hypothalamus and hippocampus. Within the ovarian follicle, expressed in granulosa cells, but not in oocytes. Present in both preantral and antral follicles, but not in atretic antral follicle.

It is found in the endoplasmic reticulum membrane. Within the ovary, required for the organization of somatic cells and oocytes into discrete follicular structures. The polypeptide is Endoplasmic reticulum metallopeptidase 1 (Rattus norvegicus (Rat)).